Here is a 329-residue protein sequence, read N- to C-terminus: DNA-directed RNA polymerase subunit alpha (329 aa).

Residues 1 to 235 (MQGSVTEFLK…EQLDAFVDLR (235 aa)) form an alpha N-terminal domain (alpha-NTD) region. The interval 249–329 (FDPILLRPVD…NWPPASIAED (81 aa)) is alpha C-terminal domain (alpha-CTD).

The protein belongs to the RNA polymerase alpha chain family. As to quaternary structure, homodimer. The RNAP catalytic core consists of 2 alpha, 1 beta, 1 beta' and 1 omega subunit. When a sigma factor is associated with the core the holoenzyme is formed, which can initiate transcription.

The enzyme catalyses RNA(n) + a ribonucleoside 5'-triphosphate = RNA(n+1) + diphosphate. In terms of biological role, DNA-dependent RNA polymerase catalyzes the transcription of DNA into RNA using the four ribonucleoside triphosphates as substrates. This Photobacterium profundum (strain SS9) protein is DNA-directed RNA polymerase subunit alpha.